Consider the following 285-residue polypeptide: sn-2 palmitoyl-lipid 9-desaturase (285 aa).

Helical transmembrane passes span 20-40 (WINVVFFGVFHALALLSPWFF) and 44-64 (ALGLLVFLHWLFGSIGICLGY). The short motif at 65–70 (HRLLSH) is the Histidine box-1 element. The chain crosses the membrane as a helical span at residues 81–101 (YAIALIGALALQGGPIFWVGG). Residues 102 to 106 (HRQHH) carry the Histidine box-2 motif. The chain crosses the membrane as a helical span at residues 169 to 189 (IPFALLLYVLGGWPFVFYGVF). Positions 239–243 (HHTYP) match the Histidine box-3 motif.

This sequence belongs to the fatty acid desaturase type 2 family. Fe(2+) serves as cofactor.

It localises to the membrane. It catalyses the reaction a 1-acyl-2-hexadecanoyl-glycerolipid + 2 reduced [2Fe-2S]-[ferredoxin] + O2 + 2 H(+) = a 1-acyl-2-[(9Z)-hexadecenoyl]-glycerolipid + 2 oxidized [2Fe-2S]-[ferredoxin] + 2 H2O. It participates in lipid metabolism; fatty acid biosynthesis. Functionally, desaturase involved in fatty acid biosynthesis. Introduces a double bond at carbon 9 of palmitoyl groups (16:0) attached to the sn-2 position of the glycerol moiety of membrane glycerolipids. The protein is sn-2 palmitoyl-lipid 9-desaturase of Nostoc sp. (strain 36).